A 175-amino-acid polypeptide reads, in one-letter code: Protein MODIFYING WALL LIGNIN-1 (175 aa).

The signal sequence occupies residues 1–24 (MFIFLFGLAAFFLCLSAEFQKAKA). The Cytoplasmic portion of the chain corresponds to 25–52 (LLRAQVFLKGKDLKWDGESCYLPENRAF). Residues 53–73 (GLGIAALVCVSVAQIVGNVVI) traverse the membrane as a helical segment. Topologically, residues 74–86 (CRGFTKTDKTRTT) are extracellular. Residues 87–107 (IFCIILLLFSWVNFAVAVTLI) traverse the membrane as a helical segment. Residues 108 to 135 (SVGASMNREQIYGKGWLNRECYLVKDGV) lie on the Cytoplasmic side of the membrane. A helical transmembrane segment spans residues 136-156 (FAASGFLSVTTMAAILGAFAF). Residues 157–175 (KVKPSLQVENHDKRHTQNV) lie on the Extracellular side of the membrane.

This sequence belongs to the DESIGUAL family. As to quaternary structure, interacts with CRK19.

The protein localises to the cell membrane. Together with MWL2, contributes to secondary cell wall biology, specifically lignin biosynthesis. The chain is Protein MODIFYING WALL LIGNIN-1 from Arabidopsis thaliana (Mouse-ear cress).